Here is a 189-residue protein sequence, read N- to C-terminus: UPF0301 protein Cgl3084/cg3414 (189 aa).

Belongs to the UPF0301 (AlgH) family.

The sequence is that of UPF0301 protein Cgl3084/cg3414 from Corynebacterium glutamicum (strain ATCC 13032 / DSM 20300 / JCM 1318 / BCRC 11384 / CCUG 27702 / LMG 3730 / NBRC 12168 / NCIMB 10025 / NRRL B-2784 / 534).